Here is a 575-residue protein sequence, read N- to C-terminus: Centrosomal protein POC5 (575 aa).

Residues 1-26 form a disordered region; the sequence is MSSDEEKYSLPVVQNDSSRGSSVSSN. Phosphoserine is present on residues S105 and S109. The Centrin-binding (CBR) 1 repeat unit spans residues 142-173; sequence HEILVSDFLVSDENLQKMENVLDLWSSGLKTN. Residues 191 to 222 are a coiled coil; it reads MEMRKEKEKHAAHLKQLCNQINELKELQKTFE. 2 Centrin-binding (CBR) repeats span residues 231–262 and 263–295; these read VISS…HVRA and RQDV…VQKQ. The stretch at 316 to 355 forms a coiled coil; the sequence is SNDYEAKVAMLSGALENAKAEIQRMQHEKEHFEDSMKKAF. 2 disordered regions span residues 376–411 and 538–575; these read AGID…MPLP and KYPR…KVVD. The segment covering 382-400 has biased composition (basic and acidic residues); that stretch reads NNKKEEYGPGVQGKEHSAH. K538 carries the N6-acetyllysine modification. Over residues 545-569 the composition is skewed to polar residues; that stretch reads PESSTSASRSLGTRSAHTQSLTSVH. A Phosphoserine modification is found at S564.

Belongs to the POC5 family. Interacts with CETN2 and CETN3. Forms a microtubule-associated complex with POC1B, CETN2 and FAM161A. Interacts with CCDC15. Post-translationally, hyperphosphorylated during recruitment to procentrioles in G2/M phase.

It is found in the cytoplasm. It localises to the cytoskeleton. The protein localises to the microtubule organizing center. Its subcellular location is the centrosome. The protein resides in the centriole. Functionally, essential for the assembly of the distal half of centrioles, required for centriole elongation. Acts as a negative regulator of centriole elongation. The sequence is that of Centrosomal protein POC5 (POC5) from Homo sapiens (Human).